The primary structure comprises 185 residues: uncharacterized protein (185 aa).

The Cytoplasmic segment spans residues M1–T69. The chain crosses the membrane as a helical span at residues F70–F90. Residue N91 is a topological domain, extracellular. A helical membrane pass occupies residues L92–I112. Topologically, residues S113 to A118 are cytoplasmic. Residues F119–F139 traverse the membrane as a helical segment. The Extracellular portion of the chain corresponds to N140–C185.

Its subcellular location is the membrane. This is an uncharacterized protein from Saccharomyces cerevisiae (strain ATCC 204508 / S288c) (Baker's yeast).